A 65-amino-acid polypeptide reads, in one-letter code: Large ribosomal subunit protein bL33c (65 aa).

It belongs to the bacterial ribosomal protein bL33 family.

The protein resides in the plastid. It localises to the chloroplast. The polypeptide is Large ribosomal subunit protein bL33c (Pyropia yezoensis (Susabi-nori)).